Here is an 806-residue protein sequence, read N- to C-terminus: ATP-dependent zinc metalloprotease FTSH 9, chloroplastic (806 aa).

The N-terminal 62 residues, 1–62 (MTSIELLSPL…SSIQLPQSVP (62 aa)), are a transit peptide targeting the chloroplast. A disordered region spans residues 84 to 116 (SSRTIVNCQEGDQKASSSEGEGKTNKDKGRKQG). Transmembrane regions (helical) follow at residues 133-153 (IIQA…MFVV) and 271-291 (GGFF…AGLL). 369 to 376 (GLPGTGKT) serves as a coordination point for ATP. H594 lines the Zn(2+) pocket. The active site involves E595. Residues H598 and D677 each contribute to the Zn(2+) site.

In the N-terminal section; belongs to the AAA ATPase family. It in the C-terminal section; belongs to the peptidase M41 family. Zn(2+) serves as cofactor.

The protein resides in the plastid. The protein localises to the chloroplast thylakoid membrane. In terms of biological role, probable ATP-dependent zinc metallopeptidase. This Arabidopsis thaliana (Mouse-ear cress) protein is ATP-dependent zinc metalloprotease FTSH 9, chloroplastic (FTSH9).